The following is a 238-amino-acid chain: Probable transcriptional regulatory protein Mmwyl1_2868 (238 aa).

It belongs to the TACO1 family.

The protein localises to the cytoplasm. The chain is Probable transcriptional regulatory protein Mmwyl1_2868 from Marinomonas sp. (strain MWYL1).